The following is a 72-amino-acid chain: Translational regulator CsrA (72 aa).

This sequence belongs to the CsrA/RsmA family. Homodimer; the beta-strands of each monomer intercalate to form a hydrophobic core, while the alpha-helices form wings that extend away from the core.

The protein resides in the cytoplasm. Its function is as follows. A translational regulator that binds mRNA to regulate translation initiation and/or mRNA stability. Usually binds in the 5'-UTR at or near the Shine-Dalgarno sequence preventing ribosome-binding, thus repressing translation. Its main target seems to be the major flagellin gene, while its function is anatagonized by FliW. In Clostridium botulinum (strain Okra / Type B1), this protein is Translational regulator CsrA.